The primary structure comprises 402 residues: Nodulation protein E (402 aa).

One can recognise a Ketosynthase family 3 (KS3) domain in the interval Asp-2–Gln-401. Active-site for beta-ketoacyl synthase activity residues include Cys-162, His-294, and His-331. The helical transmembrane segment at His-329–Ile-348 threads the bilayer.

Belongs to the thiolase-like superfamily. Beta-ketoacyl-ACP synthases family.

The protein resides in the cell inner membrane. Its function is as follows. Proposed to synthesize NOD factor fatty acyl chain. Involved in the synthesis of a highly unsaturated fatty acid moiety, which forms part of a lipo-oligosaccharide that is responsible for host specificity. In Rhizobium sp. (strain N33), this protein is Nodulation protein E (nodE).